We begin with the raw amino-acid sequence, 451 residues long: UPF0210 protein CLH_1879 (451 aa).

Belongs to the UPF0210 family. Homodimer.

The protein is UPF0210 protein CLH_1879 of Clostridium botulinum (strain Alaska E43 / Type E3).